The following is a 687-amino-acid chain: Bifunctional lysine-specific demethylase and histidyl-hydroxylase NO66 (687 aa).

Residues 1–174 (MSDKNKKVSA…RSCPLPSKKN (174 aa)) form a disordered region. The span at 23-32 (DVQKGTKNSD) shows a compositional bias: basic and acidic residues. Composition is skewed to low complexity over residues 33 to 50 (KNGAAKNNNNRNLASKNG) and 58 to 74 (KKNGSYSDGDNGSSSSS). Over residues 75–96 (GEDEEDDSTDSSDEYESSESGE) the composition is skewed to acidic residues. Composition is skewed to polar residues over residues 100–116 (LNSHSSQSSPETPANTR) and 136–156 (RTSSTPVGQSTSAARSTQQPK). The 137-residue stretch at 347–483 (NPSSYLVQLR…NLMEKLMPLV (137 aa)) folds into the JmjC domain. Fe cation-binding residues include His-387, Asp-389, and His-449.

The protein belongs to the ROX family. NO66 subfamily. Requires Fe(2+) as cofactor.

It localises to the nucleus. The catalysed reaction is N(6),N(6)-dimethyl-L-lysyl(36)-[histone H3] + 2 2-oxoglutarate + 2 O2 = L-lysyl(36)-[histone H3] + 2 formaldehyde + 2 succinate + 2 CO2. Oxygenase that can act as both a histone lysine demethylase and a ribosomal histidine hydroxylase. Specifically demethylates 'Lys-4' (H3K4me) and 'Lys-36' (H3K36me) of histone H3, thereby playing a central role in histone code. This Drosophila persimilis (Fruit fly) protein is Bifunctional lysine-specific demethylase and histidyl-hydroxylase NO66.